The sequence spans 508 residues: MSRPRILIDGDTLKLEEILQVARNEATVELSPDAATRVRASRALVDRVAAGDTPAYGINTGFGTLAEVRIDKKDLRDLQRNLILSHACGVGTPLPLPEARALLLLRCNVLAKGYSGIRMETLALALDMLNRDVVPVVPERGSVGASGDLAPLAHLALVFIGEGEAFYQGQRMPAKQALERAGLQPVVLEAKEGLALVNGTQAMCAVGTLLQLRAESLADIADVAGAMTLEGLLGSHKPFIPEIHDVRAHPGQKDVAAHLRRILVDSELVESHVNCSKVQDPYSLRCMPQVHGAAREGIAFSRRILEVEVNSATDNPLVFADTERIVSGGNFHGQPISLAMDVVAMALTQLSSISERRVEQLVNPSLSNLPAFLAKNSGLNSGFMIAQVTSAALVAESRVLSHPASVDSIPSSAGREDHVSMGMTAALKGRQVSDFARSCLAIEILVAAQALDFRLPLKPGKGALAAYELVRSKVPHMDKDRELHRDIEAVSQLVDSGELLAAVRSATA.

Positions 145–147 (ASG) form a cross-link, 5-imidazolinone (Ala-Gly). Ser146 carries the post-translational modification 2,3-didehydroalanine (Ser).

It belongs to the PAL/histidase family. Post-translationally, contains an active site 4-methylidene-imidazol-5-one (MIO), which is formed autocatalytically by cyclization and dehydration of residues Ala-Ser-Gly.

The protein localises to the cytoplasm. The catalysed reaction is L-histidine = trans-urocanate + NH4(+). The protein operates within amino-acid degradation; L-histidine degradation into L-glutamate; N-formimidoyl-L-glutamate from L-histidine: step 1/3. This chain is Histidine ammonia-lyase, found in Myxococcus xanthus (strain DK1622).